We begin with the raw amino-acid sequence, 622 residues long: Membrane protein insertase YidC (622 aa).

Residues Ile6–Glu26 traverse the membrane as a helical segment. The disordered stretch occupies residues Thr47–Arg87. Residues Leu62–Ser83 are compositionally biased toward polar residues. 3 helical membrane-spanning segments follow: residues Trp381–Ala401, Phe451–Val471, and Pro525–Val545. Residues Thr563 to Lys622 are disordered. Over residues Val583–Ala596 the composition is skewed to polar residues. Over residues Arg613–Lys622 the composition is skewed to basic residues.

This sequence belongs to the OXA1/ALB3/YidC family. Type 1 subfamily. In terms of assembly, interacts with the Sec translocase complex via SecD. Specifically interacts with transmembrane segments of nascent integral membrane proteins during membrane integration.

The protein resides in the cell inner membrane. Required for the insertion and/or proper folding and/or complex formation of integral membrane proteins into the membrane. Involved in integration of membrane proteins that insert both dependently and independently of the Sec translocase complex, as well as at least some lipoproteins. Aids folding of multispanning membrane proteins. This Nitrosomonas eutropha (strain DSM 101675 / C91 / Nm57) protein is Membrane protein insertase YidC.